Consider the following 188-residue polypeptide: Peptidyl-tRNA hydrolase (188 aa).

Phe15 provides a ligand contact to tRNA. Catalysis depends on His20, which acts as the Proton acceptor. 3 residues coordinate tRNA: Tyr64, Asn66, and Asn112.

It belongs to the PTH family. As to quaternary structure, monomer.

It localises to the cytoplasm. It carries out the reaction an N-acyl-L-alpha-aminoacyl-tRNA + H2O = an N-acyl-L-amino acid + a tRNA + H(+). Its function is as follows. Hydrolyzes ribosome-free peptidyl-tRNAs (with 1 or more amino acids incorporated), which drop off the ribosome during protein synthesis, or as a result of ribosome stalling. Functionally, catalyzes the release of premature peptidyl moieties from peptidyl-tRNA molecules trapped in stalled 50S ribosomal subunits, and thus maintains levels of free tRNAs and 50S ribosomes. This Borreliella burgdorferi (strain ATCC 35210 / DSM 4680 / CIP 102532 / B31) (Borrelia burgdorferi) protein is Peptidyl-tRNA hydrolase.